The primary structure comprises 95 residues: YcgL domain-containing protein Patl_2802 (95 aa).

The region spanning 4–88 (LLCAVYKSSK…PEENLLKQHL (85 aa)) is the YcgL domain.

The protein is YcgL domain-containing protein Patl_2802 of Pseudoalteromonas atlantica (strain T6c / ATCC BAA-1087).